We begin with the raw amino-acid sequence, 571 residues long: Proline--tRNA ligase (571 aa).

Belongs to the class-II aminoacyl-tRNA synthetase family. ProS type 1 subfamily. In terms of assembly, homodimer.

Its subcellular location is the cytoplasm. It carries out the reaction tRNA(Pro) + L-proline + ATP = L-prolyl-tRNA(Pro) + AMP + diphosphate. Catalyzes the attachment of proline to tRNA(Pro) in a two-step reaction: proline is first activated by ATP to form Pro-AMP and then transferred to the acceptor end of tRNA(Pro). As ProRS can inadvertently accommodate and process non-cognate amino acids such as alanine and cysteine, to avoid such errors it has two additional distinct editing activities against alanine. One activity is designated as 'pretransfer' editing and involves the tRNA(Pro)-independent hydrolysis of activated Ala-AMP. The other activity is designated 'posttransfer' editing and involves deacylation of mischarged Ala-tRNA(Pro). The misacylated Cys-tRNA(Pro) is not edited by ProRS. In Shewanella baltica (strain OS185), this protein is Proline--tRNA ligase.